The chain runs to 158 residues: Large ribosomal subunit protein eL20z (158 aa).

The protein belongs to the eukaryotic ribosomal protein eL20 family.

This is Large ribosomal subunit protein eL20z (RPL18A1) from Arabidopsis thaliana (Mouse-ear cress).